The sequence spans 418 residues: Probable endo-beta-1,4-glucanase celB (418 aa).

A signal peptide spans M1 to A18. Residues N46, N118, and N136 are each glycosylated (N-linked (GlcNAc...) asparagine). E215 serves as the catalytic Nucleophile. Catalysis depends on E220, which acts as the Proton donor. 2 N-linked (GlcNAc...) asparagine glycosylation sites follow: N234 and N291.

Belongs to the glycosyl hydrolase 7 (cellulase C) family.

It localises to the secreted. The catalysed reaction is Endohydrolysis of (1-&gt;4)-beta-D-glucosidic linkages in cellulose, lichenin and cereal beta-D-glucans.. Its function is as follows. Has endoglucanase activity on substrates containing beta-1,4 glycosidic bonds, like in carboxymethylcellulose (CMC), hydroxyethylcellulose (HEC) and beta-glucan. Involved in the degradation of complex natural cellulosic substrates. The polypeptide is Probable endo-beta-1,4-glucanase celB (celB) (Aspergillus clavatus (strain ATCC 1007 / CBS 513.65 / DSM 816 / NCTC 3887 / NRRL 1 / QM 1276 / 107)).